A 60-amino-acid polypeptide reads, in one-letter code: Metallothionein B (60 aa).

The segment at 1-28 (MDPCDCSKSGTCNCGGSCTCTNCSCTTC) is beta. Residues C4, C6, C12, C14, C18, C20, C23, C25, C28, C32, C33, C35, C36, C40, C43, C47, C49, C54, C58, and C59 each coordinate a divalent metal cation. The segment at 29–60 (KKSCCPCCPSGCTKCASGCVCKGKTCDTSCCQ) is alpha.

This sequence belongs to the metallothionein superfamily. Type 1 family.

In terms of biological role, metallothioneins have a high content of cysteine residues that bind various heavy metals. The polypeptide is Metallothionein B (mtb) (Dicentrarchus labrax (European seabass)).